The following is a 350-amino-acid chain: uncharacterized protein (350 aa).

The segment covering 197-212 has biased composition (basic and acidic residues); the sequence is KNDNSEDNRSEDDLKS. Residues 197-217 are disordered; sequence KNDNSEDNRSEDDLKSSQDPV.

Its subcellular location is the plastid. The protein localises to the chloroplast. This is an uncharacterized protein from Euglena gracilis.